The sequence spans 435 residues: GPI-anchor transamidase component PIGU (435 aa).

Residues 2–3 (AA) are Cytoplasmic-facing. The helical transmembrane segment at 4–22 (PLVLVLVVAVTVRAALFRS) threads the bilayer. The Lumenal segment spans residues 23–78 (SLAEFISERVEVVSPLSSWKRVVEGLSLLDLGVSPYSGAVFHETPLIIYLFHFLID). The chain crosses the membrane as a helical span at residues 79-99 (YAELVFMITDALTAIALYFAI). Residues 100–136 (QDFNKVVFKKQKLLLELDQYAPDVAELIRTPMEMRYI) are Cytoplasmic-facing. Helical transmembrane passes span 137-158 (PLKV…VAKS), 159-178 (TCAI…IKGS), 179-194 (AFLS…YQSL), and 195-205 (YPLTLFVPGLL). The Cytoplasmic portion of the chain corresponds to 206–222 (YLLQRQYIPVKMKSKAF). Residues Lys-216 and Met-217 each contribute to the a cardiolipin site. The chain crosses the membrane as a helical span at residues 223 to 244 (WIFSWEYAMMYVGSLVVIICLS). Residues 245-286 (FFLLSSWDFIPAVYGFILSVPDLTPNIGLFWYFFAEMFEHFS) lie on the Lumenal side of the membrane. A helical membrane pass occupies residues 287 to 306 (LFFVCVFQINVFFYTIPLAI). Over 307 to 311 (KLKEH) the chain is Cytoplasmic. Lys-309 is an a cardiolipin binding site. The next 2 membrane-spanning stretches (helical) occupy residues 312–331 (PIFF…SYPT) and 332–345 (VGDV…FPVW). Over 346–354 (NHLYRFLRN) the chain is Cytoplasmic. Residues 355-372 (IFVLTCIIIVCSLLFPVL) form a helical membrane-spanning segment. Residues 373–384 (WHLWIYAGSANS) lie on the Lumenal side of the membrane. A 2-acyl-6-[6-phosphoethanolamine-alpha-D-mannosyl-(1-&gt;2)-6-phosphoethanolamine-alpha-D-mannosyl-(1-&gt;6)-2-phosphoethanolamine-alpha-D-mannosyl-(1-&gt;4)-alpha-D-glucosaminyl]-1-(1-radyl,2-acyl-sn-glycero-3-phospho)-1D-myo-inositol contacts are provided by Asn-383 and Asn-385. A helical membrane pass occupies residues 385–406 (NFFYAITLTFNVGQILLISDYF). Residues 407 to 435 (YAFLRREYYLTHGLYLTAKDGTEAMLVLK) lie on the Cytoplasmic side of the membrane.

It belongs to the PIGU family. In terms of assembly, heteropentamer. Part of the GPI-anchor transamidase complex, consisting of PIGK, PIGT, PIGS, PIGU and GAA1.

The protein localises to the endoplasmic reticulum membrane. It participates in glycolipid biosynthesis; glycosylphosphatidylinositol-anchor biosynthesis. Its function is as follows. Component of the glycosylphosphatidylinositol-anchor (GPI-anchor) transamidase (GPI-T) complex that catalyzes the formation of the linkage between a proprotein and a GPI-anchor and participates in GPI anchored protein biosynthesis. Binds the lipid portion of GPI-anchor. May act as an organizer in the transmembrane layer to recruit other subunits, and thus is essential for assembly of the complex. This Homo sapiens (Human) protein is GPI-anchor transamidase component PIGU.